Reading from the N-terminus, the 112-residue chain is Larval cuticle protein 4 (112 aa).

The first 16 residues, 1 to 16 (MFKILLVCALVALVAA), serve as a signal peptide directing secretion. One can recognise a Chitin-binding type R&amp;R domain in the interval 31–92 (ADGFVSKLVL…PQSDLLPTPP (62 aa)).

Functionally, component of the larval cuticle. The sequence is that of Larval cuticle protein 4 (Lcp4) from Drosophila melanogaster (Fruit fly).